We begin with the raw amino-acid sequence, 409 residues long: Putative competence-damage inducible protein (409 aa).

The protein belongs to the CinA family.

This is Putative competence-damage inducible protein from Clostridium botulinum (strain 657 / Type Ba4).